The chain runs to 618 residues: Sodium/iodide cotransporter (618 aa).

Over methionine 1–alanine 14 the chain is Extracellular. The helical transmembrane segment at tryptophan 15 to glycine 31 threads the bilayer. Topologically, residues leucine 32–alanine 56 are cytoplasmic. A discontinuously helical membrane pass occupies residues valine 57–alanine 80. Serine 69, valine 71, and glutamine 72 together coordinate Na(+). Iodide is bound at residue valine 76. Topologically, residues alanine 81 to glycine 84 are extracellular. The chain crosses the membrane as a helical span at residues leucine 85–phenylalanine 105. Methionine 90 lines the iodide pocket. The Cytoplasmic segment spans residues leucine 106 to arginine 130. A helical membrane pass occupies residues leucine 131–asparagine 157. Tyrosine 144 contacts Na(+). The Extracellular portion of the chain corresponds to glutamine 158 to aspartate 163. The helical transmembrane segment at isoleucine 164–valine 181 threads the bilayer. Residues glycine 182–tryptophan 189 lie on the Cytoplasmic side of the membrane. Residues threonine 190–arginine 208 traverse the membrane as a helical segment. The Extracellular segment spans residues glycine 209 to threonine 243. The chain crosses the membrane as a discontinuously helical span at residues phenylalanine 244–valine 266. Tryptophan 255 contacts iodide. Methionine 258 is a binding site for Na(+). The Cytoplasmic segment spans residues glutamine 267–alanine 278. A helical transmembrane segment spans residues lysine 279–isoleucine 301. Over valine 302 to aspartate 335 the chain is Extracellular. Residues leucine 336–alanine 363 traverse the membrane as a helical segment. Topologically, residues alanine 364–isoleucine 386 are cytoplasmic. Residues serine 387–leucine 408 form a helical membrane-spanning segment. Topologically, residues glycine 409–glycine 411 are extracellular. A helical transmembrane segment spans residues valine 412–leucine 437. Leucine 413 is an iodide binding site. Positions 416 and 417 each coordinate Na(+). Iodide is bound at residue phenylalanine 417. Residues proline 438–asparagine 441 lie on the Cytoplasmic side of the membrane. Residues threonine 442 to leucine 465 form a helical membrane-spanning segment. Residues tyrosine 466 to alanine 520 lie on the Extracellular side of the membrane. N-linked (GlcNAc...) asparagine glycosylation is found at asparagine 485 and asparagine 497. Residues isoleucine 521–threonine 545 traverse the membrane as a helical segment. Over glycine 546–leucine 618 the chain is Cytoplasmic. Serine 551 is subject to Phosphoserine; by PKA. The interval glutamate 587 to leucine 618 is disordered.

Belongs to the sodium:solute symporter (SSF) (TC 2.A.21) family. Monomer.

The protein resides in the cell membrane. The protein localises to the cytoplasm. The enzyme catalyses iodide(out) + 2 Na(+)(out) = iodide(in) + 2 Na(+)(in). The catalysed reaction is chlorate(out) + 2 Na(+)(out) = chlorate(in) + 2 Na(+)(in). It catalyses the reaction thiocyanate(out) + 2 Na(+)(out) = thiocyanate(in) + 2 Na(+)(in). It carries out the reaction nitrate(out) + 2 Na(+)(out) = nitrate(in) + 2 Na(+)(in). The enzyme catalyses selenocyanate(out) + 2 Na(+)(out) = selenocyanate(in) + 2 Na(+)(in). Its activity is regulated as follows. Perchlorate inhibits iodide transport activity. Oxyanions inhibit iodide transport activity by blocking the binding sites for iodide and one of the sodium ions. In terms of biological role, sodium:iodide symporter that mediates the transport of iodide into the thyroid gland. Can also mediate the transport of chlorate, thiocynate, nitrate and selenocynate. The sequence is that of Sodium/iodide cotransporter (Slc5a5) from Rattus norvegicus (Rat).